Here is a 271-residue protein sequence, read N- to C-terminus: ATP synthase subunit a (271 aa).

Helical transmembrane passes span 38 to 58 (FWTLNIDSMFFSVVLGLLFLV), 100 to 120 (LIAPLALTIFVWVFLMNLMDL), 146 to 166 (DVNITLSMALGVFILILFYSI), 220 to 240 (LIFILIAGLLPWWSQWILNVP), and 242 to 262 (AIFHILIITLQAFIFMVLTIV).

This sequence belongs to the ATPase A chain family. F-type ATPases have 2 components, CF(1) - the catalytic core - and CF(0) - the membrane proton channel. CF(1) has five subunits: alpha(3), beta(3), gamma(1), delta(1), epsilon(1). CF(0) has three main subunits: a(1), b(2) and c(9-12). The alpha and beta chains form an alternating ring which encloses part of the gamma chain. CF(1) is attached to CF(0) by a central stalk formed by the gamma and epsilon chains, while a peripheral stalk is formed by the delta and b chains.

Its subcellular location is the cell inner membrane. In terms of biological role, key component of the proton channel; it plays a direct role in the translocation of protons across the membrane. The protein is ATP synthase subunit a of Salmonella arizonae (strain ATCC BAA-731 / CDC346-86 / RSK2980).